A 397-amino-acid chain; its full sequence is Probable sugar efflux transporter (397 aa).

12 consecutive transmembrane segments (helical) span residues 15–35, 51–71, 80–100, 103–123, 137–157, 169–189, 209–229, 246–266, 277–297, 299–319, 333–353, and 365–385; these read VIVM…PVAL, GLMI…CMLM, LLIS…FAWN, VLLI…SITA, QALG…LPLG, TFTL…RLLP, PMLI…FTAY, KATA…VLFS, LLSS…VSGI, GAIF…SLAM, VATA…ALIG, and IGYV…LMFL.

This sequence belongs to the major facilitator superfamily. SotB (TC 2.A.1.2) family.

It localises to the cell inner membrane. Its function is as follows. Involved in the efflux of sugars. The physiological role may be the reduction of the intracellular concentration of toxic sugars or sugar metabolites. In Mannheimia succiniciproducens (strain KCTC 0769BP / MBEL55E), this protein is Probable sugar efflux transporter.